Consider the following 208-residue polypeptide: Endo-1,4-beta-xylanase B (208 aa).

Positions 1-16 (MKVTAAFAGLLATTLA) are cleaved as a signal peptide. In terms of domain architecture, GH11 spans 17–207 (APATELVTRS…GTGTASVTVS (191 aa)). Glu-101 acts as the Nucleophile in catalysis. Residue Glu-194 is the Proton donor of the active site.

Belongs to the glycosyl hydrolase 11 (cellulase G) family.

Its subcellular location is the secreted. The catalysed reaction is Endohydrolysis of (1-&gt;4)-beta-D-xylosidic linkages in xylans.. It functions in the pathway glycan degradation; xylan degradation. Its activity is regulated as follows. N-bromosuccinimide completely inhibits the catalytic activity. In terms of biological role, endo-1,4-beta-xylanase involved in the hydrolysis of xylan, a major structural heterogeneous polysaccharide found in plant biomass representing the second most abundant polysaccharide in the biosphere, after cellulose. The sequence is that of Endo-1,4-beta-xylanase B (xynB) from Talaromyces purpureogenus (Soft rot fungus).